The primary structure comprises 427 residues: Homeotic protein caudal (427 aa).

The tract at residues 104–273 (QLMQQHHHHH…QPQPGKTRTK (170 aa)) is disordered. Low complexity predominate over residues 116-129 (ASSSSASSGSSSSG). The span at 145–164 (GVGGAGGGGGVGGATDGGPG) shows a compositional bias: gly residues. A compositionally biased stretch (polar residues) spans 183–195 (ITVSGSEISSPGA). Positions 209 to 243 (HLSAVANNNNNNNNNNNSPSTHNNNNNNNSVSNNN) are enriched in low complexity. Residue threonine 245 is modified to Phosphothreonine. The Antp-type hexapeptide motif lies at 252–257 (YFDWMK). The homeobox DNA-binding region spans 273–332 (KDKYRVVYTDFQRLELEKEYCTSRYITIRRKSELAQTLSLSERQVKIWFQNRRAKERKQN).

It belongs to the Caudal homeobox family. As to expression, maternally localized in an anteroposterior gradient in the syncytial blastoderm. Also expressed in the pole cells. Zygotically localized in the primordia of the terminal abdominal segment, the hindgut and in the posterior midgut rudiment. Expressed in the gut, the gonads and parts of the genital disks of third instar larvae (at protein level).

Its subcellular location is the nucleus. In terms of biological role, caudal (cad) is one of a number of transcription factors controlling segmentation of the embryo. Further transcriptional regulation via a 5' flanking region containing DNA replication-related elements (DRE) and by dref also regulated by trh and tgo via the CNS midline element. Alongside Bicoid (bcd), caudal forms concentration gradients down the anterior-posterior (A-P) axis providing positional information and subsequent induction of the gap genes. Plays a role in gastrulation/germ band extension, hindgut morphogenesis, positive regulation of cell proliferation, genital disk development and pattern formation. Acts as a key regulator of the Hox gene network and activates transcription via the downstream core promoter element (DPE) relative to the TATA box. Plays a role in the establishment of the hindgut and in the invagination of the hindgut primordium during gastrulation. These effects on the gut are achieved by acting combinatorially at the posterior of the embryo to activate transcription of different targets including fog, fkh and wg. Caudal is involved in regulation of proliferation through transactivation of the E2F gene. Postembryonically its function is mostly restricted to the intestine where it regulates antimicrobial peptide (AMP) levels preserving the normal gut flora. This Drosophila melanogaster (Fruit fly) protein is Homeotic protein caudal (cad).